The following is a 431-amino-acid chain: Tyrosine--tRNA ligase (431 aa).

Tyr34 is a binding site for L-tyrosine. The 'HIGH' region motif lies at 39–48 (PTADSLHIGH). Residues Tyr171 and Gln175 each contribute to the L-tyrosine site. Residues 231-235 (KFGKT) carry the 'KMSKS' region motif. ATP is bound at residue Lys234. The region spanning 353 to 422 (INVVEALVKT…GKYTILRRGK (70 aa)) is the S4 RNA-binding domain.

It belongs to the class-I aminoacyl-tRNA synthetase family. TyrS type 1 subfamily. Homodimer.

The protein localises to the cytoplasm. It catalyses the reaction tRNA(Tyr) + L-tyrosine + ATP = L-tyrosyl-tRNA(Tyr) + AMP + diphosphate + H(+). Catalyzes the attachment of tyrosine to tRNA(Tyr) in a two-step reaction: tyrosine is first activated by ATP to form Tyr-AMP and then transferred to the acceptor end of tRNA(Tyr). The protein is Tyrosine--tRNA ligase of Neisseria meningitidis serogroup C (strain 053442).